The chain runs to 318 residues: ADP-ribosyl cyclase/cyclic ADP-ribose hydrolase 2 (318 aa).

The first 32 residues, 1-32, serve as a signal peptide directing secretion; sequence MAAQGCAASRLLQLLLQLLLLLLLLAAGGARA. Cystine bridges form between C51–C67, C83–C163, and C144–C157. 2 N-linked (GlcNAc...) asparagine glycosylation sites follow: N66 and N95. W109 is an NAD(+) binding site. Nicotinamide is bound at residue W109. N-linked (GlcNAc...) asparagine glycosylation is present at N148. Residue W172 participates in NAD(+) binding. N-linked (GlcNAc...) asparagine glycosylation occurs at N192. E210 is an NAD(+) binding site. Intrachain disulfides connect C238-C259 and C271-C280. A293 carries the GPI-anchor amidated alanine lipid modification. Residues 294–318 constitute a propeptide, removed in mature form; that stretch reads PSLYTEQRAGLIIPLFLVLASRTQL.

The protein belongs to the ADP-ribosyl cyclase family. As to quaternary structure, homodimer. As to expression, expressed in various tissues including placenta, lung, liver and kidney.

It localises to the cell membrane. It carries out the reaction NAD(+) + H2O = ADP-D-ribose + nicotinamide + H(+). The enzyme catalyses NAD(+) = cyclic ADP-beta-D-ribose + nicotinamide + H(+). It catalyses the reaction cyclic ADP-beta-D-ribose + H2O = ADP-D-ribose. With respect to regulation, ADP-ribosyl cyclase and cADPR hydrolase activities are both activated by Zn(2+) or Mn(2+), and inhibited by Cu(2+), while Mg(2+) and Ca(2+) do not have any significant influence. Functionally, catalyzes both the synthesis of cyclic ADP-beta-D-ribose (cADPR) from NAD(+), and its hydrolysis to ADP-D-ribose (ADPR). Cyclic ADPR is known to serve as an endogenous second messenger that elicits calcium release from intracellular stores, and thus regulates the mobilization of intracellular calcium. May be involved in pre-B-cell growth. The chain is ADP-ribosyl cyclase/cyclic ADP-ribose hydrolase 2 (BST1) from Homo sapiens (Human).